Here is a 273-residue protein sequence, read N- to C-terminus: Undecaprenyl-diphosphatase (273 aa).

Transmembrane regions (helical) follow at residues 4 to 24 (LILI…FLPI), 43 to 63 (KAQV…CWEY), 82 to 102 (FVLN…LFIK), 108 to 128 (LFHP…ILWA), 183 to 203 (AAEF…FYDV), 217 to 237 (MFVV…RGFI), and 253 to 273 (IGFG…WSAG).

The protein belongs to the UppP family.

The protein localises to the cell inner membrane. The enzyme catalyses di-trans,octa-cis-undecaprenyl diphosphate + H2O = di-trans,octa-cis-undecaprenyl phosphate + phosphate + H(+). Its function is as follows. Catalyzes the dephosphorylation of undecaprenyl diphosphate (UPP). Confers resistance to bacitracin. This Nitrosomonas eutropha (strain DSM 101675 / C91 / Nm57) protein is Undecaprenyl-diphosphatase.